Consider the following 2444-residue polypeptide: Protein SON (2444 aa).

At A2 the chain carries N-acetylalanine. Position 16 is an N6-acetyllysine (K16). Residues 23 to 37 (ELSSGRSEGQLNGET) show a composition bias toward polar residues. Positions 23–58 (ELSSGRSEGQLNGETNPPIEGNQAGDTAASARSLPN) are disordered. Residue K64 forms a Glycyl lysine isopeptide (Lys-Gly) (interchain with G-Cter in SUMO2) linkage. Positions 79 to 88 (YKPDLKEASR) are enriched in basic and acidic residues. The interval 79-155 (YKPDLKEASR…GNLESDSFLK (77 aa)) is disordered. At S94 the chain carries Phosphoserine. Basic residues predominate over residues 106 to 130 (KKSKKHKKHKNKKKKKKKEKEKKYK). Positions 131–155 (RQPEESESKLKSHHDGNLESDSFLK) are enriched in basic and acidic residues. 4 positions are modified to phosphoserine: S142, S150, S152, and S158. N6-acetyllysine is present on K284. 2 disordered regions span residues 301 to 358 (TLTI…ESLE) and 391 to 468 (GPPV…PEPP). 2 stretches are compositionally biased toward pro residues: residues 393–406 (PVTP…PSAT) and 420–439 (PELP…PSVT). Phosphothreonine is present on T395. The interval 721–850 (LASNTMDSQM…LATSSMDSQM (130 aa)) is 13 X 10 AA tandem repeats of L-A-[ST]-[NSG]-[TS]-MDSQM. The tract at residues 907–983 (DPYRLAQDPY…IAPRPYRLAP (77 aa)) is 11 X 7 AA tandem repeats of [DR]-P-Y-R-[LI][AG][QHP]. R945 carries the post-translational modification Omega-N-methylarginine. T954 is subject to Phosphothreonine. The residue at position 993 (S993) is a Phosphoserine. 14 tandem repeats follow at residues 1001-1006 (ERSMMS), 1009-1014 (ERSMMS), 1016-1021 (ERSMMS), 1025-1030 (ERSMMS), 1033-1038 (ERSMMS), 1041-1046 (ERSMMS), 1050-1055 (ERSMMS), 1058-1063 (ERSMMS), 1066-1071 (ERSMMS), 1075-1080 (DRSMMS), 1084-1089 (DRSMMS), 1095-1100 (DRSMMS), 1106-1111 (DRSMMS), and 1115-1120 (DRSMMS). The interval 1001–1120 (ERSMMSSYER…SSYTDRSMMS (120 aa)) is 14 X 6 AA repeats of [ED]-R-S-M-M-S. R1002 carries the post-translational modification Asymmetric dimethylarginine. R1017 bears the Asymmetric dimethylarginine mark. A phosphoserine mark is found at S1030 and S1038. 2 positions are modified to phosphoserine: S1055 and S1063. S1077 carries the post-translational modification Phosphoserine. The span at 1141 to 1168 (PPLPPEEPPTMPPLPPEEPPMTPPLPPE) shows a compositional bias: pro residues. The tract at residues 1141–1173 (PPLPPEEPPTMPPLPPEEPPMTPPLPPEEPPEG) is 3 X 11 AA tandem repats of P-P-L-P-P-E-E-P-P-[TME]-[MTG]. Positions 1141-1213 (PPLPPEEPPT…PEPPVSQSEI (73 aa)) are disordered. A compositionally biased stretch (polar residues) spans 1177–1213 (STEQSALTADNTWSTEVTLSTGESLSQPEPPVSQSEI). A phosphoserine mark is found at S1678, S1723, S1727, S1772, S1784, S1791, S1794, S1807, and S1808. Residues 1802–2072 (ERASESSSEE…RSPKRLTDLD (271 aa)) form a disordered region. Composition is skewed to basic and acidic residues over residues 1815–1826 (YEIFVKVKDTHE), 1834–1847 (RDKG…DSSL), and 1855–1870 (KSSE…ESRS). Composition is skewed to basic residues over residues 1871 to 1934 (RARK…RKRS) and 1942 to 1973 (AARA…RRRS). 7 tandem repeats follow at residues 1950-1956 (PSRRSRS), 1959-1977 (PSRR…FSIS), 1978-1984 (PSRRSRT), 1985-1991 (PSRRSRT), 1992-1998 (PSRRSRT), 1999-2005 (PSRRSRT), and 2006-2012 (PSRRSRT). Residues 1950–2019 (PSRRSRSHTP…SRTPSRRRRS (70 aa)) form a 7 X 7 AA repeats of P-S-R-R-S-R-[TS] region. The tract at residues 1959–2030 (PSRRRRSRSV…SAVRRRSFSI (72 aa)) is 2 X 19 AA repeats of P-S-R-R-R-R-S-R-S-V-V-R-R-R-S-F-S-I-S. Residues S1973, S1975, and S1977 each carry the phosphoserine modification. Residues 1980 to 2027 (RRSRTPSRRSRTPSRRSRTPSRRSRTPSRRSRTPSRRRRSRSAVRRRS) are compositionally biased toward basic residues. Residues 2013–2019 (PSRRRRS) form a 2-7; approximate repeat. Residues 2020 to 2030 (RSAVRRRSFSI) form a 3-2; approximate repeat. S2027, S2029, S2031, S2047, and S2049 each carry phosphoserine. The tract at residues 2031-2057 (SPVRLRRSRTPLRRRFSRSPIRRKRSR) is 3 X tandem repeats of [ST]-P-[VLI]-R-[RL]-[RK]-[RF]-S-R. Residues 2034-2056 (RLRRSRTPLRRRFSRSPIRRKRS) show a composition bias toward basic residues. The span at 2057 to 2072 (RSSERGRSPKRLTDLD) shows a compositional bias: basic and acidic residues. N6-acetyllysine; alternate is present on K2073. Residue K2073 forms a Glycyl lysine isopeptide (Lys-Gly) (interchain with G-Cter in SUMO2); alternate linkage. Residue K2110 forms a Glycyl lysine isopeptide (Lys-Gly) (interchain with G-Cter in SUMO2) linkage. S2147 carries the post-translational modification Phosphoserine. K2167 is covalently cross-linked (Glycyl lysine isopeptide (Lys-Gly) (interchain with G-Cter in SUMO2)). Phosphothreonine is present on T2181. Residues 2192–2238 (EFPVSSGSQHRKKEADSVYGEWVPVEKNGEESKDDDNVFSSSLPSEP) form a disordered region. Residue S2256 is modified to Phosphoserine. The G-patch domain maps to 2323-2369 (TGGMGAVLMRKMGWREGEGLGKNKEGNKEPILVDFKTDRKGLVAVGE). Residues 2389–2444 (HPVSALMEICNKRRWQPPEFLLVHDSGPDHRKHFLFRVLRNGSPYQPNCMFFLNRY) enclose the DRBM domain.

Interacts with SRSF2. Associates with the spliceosome. Interacts with USH1G. In terms of tissue distribution, widely expressed. Highly expressed in brain, heart, spleen, liver, skeletal muscle, kidney and testis.

It localises to the nucleus speckle. Functionally, RNA-binding protein that acts as a mRNA splicing cofactor by promoting efficient splicing of transcripts that possess weak splice sites. Specifically promotes splicing of many cell-cycle and DNA-repair transcripts that possess weak splice sites, such as TUBG1, KATNB1, TUBGCP2, AURKB, PCNT, AKT1, RAD23A, and FANCG. Probably acts by facilitating the interaction between Serine/arginine-rich proteins such as SRSF2 and the RNA polymerase II. Also binds to DNA; binds to the consensus DNA sequence: 5'-GA[GT]AN[CG][AG]CC-3'. Essential for correct RNA splicing of multiple genes critical for brain development, neuronal migration and metabolism, including TUBG1, FLNA, PNKP, WDR62, PSMD3, PCK2, PFKL, IDH2, and ACY1. May also regulate the ghrelin signaling in hypothalamic neuron by acting as a negative regulator of GHSR expression. The protein is Protein SON (Son) of Mus musculus (Mouse).